Here is a 304-residue protein sequence, read N- to C-terminus: E3 ubiquitin-protein ligase BOI (304 aa).

A WRD domain region spans residues 178–214 (LQERVKSLYVENQIWRDIAQTNEANANTLRTNLDQVL). The stretch at 197–220 (QTNEANANTLRTNLDQVLAQLETF) forms a coiled coil. The segment at 254–291 (CKRCGEREASVLVLPCRHLCLCTVCGGSALLRTCPVCD) adopts an RING-type zinc-finger fold.

Interacts with MYB108/BOS1 and the DELLA proteins GAI, RGA, RGL1, RGL2 and RGL3. As to expression, expressed in leaves, siliques, roots, flowering tissues and stigma tips.

The protein resides in the nucleus. The catalysed reaction is S-ubiquitinyl-[E2 ubiquitin-conjugating enzyme]-L-cysteine + [acceptor protein]-L-lysine = [E2 ubiquitin-conjugating enzyme]-L-cysteine + N(6)-ubiquitinyl-[acceptor protein]-L-lysine.. It participates in protein degradation; proteasomal ubiquitin-dependent pathway. Functionally, E3 ubiquitin-protein ligase involved in the regulation of pathogen and abiotic stress responses by facilitating degradation of MYB108/BOI. Attenuates cell death by preventing caspase activation. Has no effect on the stability of the DELLA proteins. Not regulated by MYB108/BOI. This chain is E3 ubiquitin-protein ligase BOI (BOI), found in Arabidopsis thaliana (Mouse-ear cress).